Reading from the N-terminus, the 331-residue chain is Ketol-acid reductoisomerase (NADP(+)) (331 aa).

The KARI N-terminal Rossmann domain maps to 2 to 182 (AKVYYDEDAN…GGTKGGVLET (181 aa)). NADP(+) is bound by residues 25–28 (YGSQ), S51, S53, and 83–86 (DEKQ). Residue H108 is part of the active site. G134 provides a ligand contact to NADP(+). Positions 183-328 (TFKDETETDL…VELRAMMPWL (146 aa)) constitute a KARI C-terminal knotted domain. Mg(2+) is bound by residues D191, E195, E227, and E231. S252 is a binding site for substrate.

This sequence belongs to the ketol-acid reductoisomerase family. Mg(2+) serves as cofactor.

It carries out the reaction (2R)-2,3-dihydroxy-3-methylbutanoate + NADP(+) = (2S)-2-acetolactate + NADPH + H(+). The catalysed reaction is (2R,3R)-2,3-dihydroxy-3-methylpentanoate + NADP(+) = (S)-2-ethyl-2-hydroxy-3-oxobutanoate + NADPH + H(+). It functions in the pathway amino-acid biosynthesis; L-isoleucine biosynthesis; L-isoleucine from 2-oxobutanoate: step 2/4. The protein operates within amino-acid biosynthesis; L-valine biosynthesis; L-valine from pyruvate: step 2/4. Its function is as follows. Involved in the biosynthesis of branched-chain amino acids (BCAA). Catalyzes an alkyl-migration followed by a ketol-acid reduction of (S)-2-acetolactate (S2AL) to yield (R)-2,3-dihydroxy-isovalerate. In the isomerase reaction, S2AL is rearranged via a Mg-dependent methyl migration to produce 3-hydroxy-3-methyl-2-ketobutyrate (HMKB). In the reductase reaction, this 2-ketoacid undergoes a metal-dependent reduction by NADPH to yield (R)-2,3-dihydroxy-isovalerate. The sequence is that of Ketol-acid reductoisomerase (NADP(+)) from Clostridium novyi (strain NT).